Reading from the N-terminus, the 345-residue chain is MNYQRSFEDLEFNAIKWWPQELSATVAEASVLPILISSQDLFISILKLSGTHPEQIFDVINAAQISANLFLKHLVVLADYGGEMIKRLGKEFQEIFPRMDSTLEYYMNYTFKGEQYTYIFKKLPIKGLDNSKLAIDGKAIIEIKPLSDLYRDMIMILLYGSTTEQFNLAGLEKCEIGTILGKNEIIYTYITQKYLYVSRITNGANTNSLGQIAQTYVCDILSKYLPNDYSVTRNGKILLSDLNSQDSTKTSFDILVEFADKKVGIEVSFQVTTNSTIERKAGQARDRQNRMHAHYYWIAYVIDGAGNFERSGAVRAICRYSDCTVAYSESEIAVLAAFIQEKFNA.

The enzyme catalyses Endonucleolytic cleavage of DNA to give specific double-stranded fragments with terminal 5'-phosphates.. Its function is as follows. A P subtype restriction enzyme that recognizes the double-stranded sequence 5'-GGYRCC-3' and cleaves after G-1. The polypeptide is Type II restriction enzyme HgiCI (hgiCIR) (Herpetosiphon aurantiacus (Herpetosiphon giganteus)).